Here is a 489-residue protein sequence, read N- to C-terminus: Ubiquitin-like-specific protease ESD4 (489 aa).

The segment at 43-66 is disordered; the sequence is AMSEDSGKPASSNPTISRISRYPD. The segment covering 51–60 has biased composition (polar residues); that stretch reads PASSNPTISR. Positions 200 to 223 form a coiled coil; sequence ASSLEAYRKLMQSAEKRNSKLEAL. Active-site residues include H380, D397, and C448.

Belongs to the peptidase C48 family. Interacts with NUA (via N-terminus). Interacts with KIN10. As to expression, expressed in seedlings, leaves, shoots, flowers and roots.

It is found in the nucleus membrane. It carries out the reaction Hydrolysis of the alpha-linked peptide bond in the sequence Gly-Gly-|-Ala-Thr-Tyr at the C-terminal end of the small ubiquitin-like modifier (SUMO) propeptide, Smt3, leading to the mature form of the protein. A second reaction involves the cleavage of an epsilon-linked peptide bond between the C-terminal glycine of the mature SUMO and the lysine epsilon-amino group of the target protein.. Inhibited by thiol reagent and N-ethylmaleimide, but not by ubiquitin aldehyde, pepstatin A or benzamidine HCl. Functionally, protease that catalyzes two essential functions in the SUMO pathway: processing of full-length SUMOs to their mature forms and deconjugation of SUMO from targeted proteins. Cleaves precursors of SUM1 and SUM2, but not of SUM3 or SUM5. Able to release SUM1 and SUM2 from conjugates, but unable to cleave SUM3. Acts predominantly as an isopeptidase, cleaving SUMO-conjugated proteins better than SUMO peptides. Plays an important role in the control of flowering time. This is Ubiquitin-like-specific protease ESD4 (ESD4) from Arabidopsis thaliana (Mouse-ear cress).